The following is a 570-amino-acid chain: FERM domain-containing protein 5 (570 aa).

Residues Tyr17–Lys298 form the FERM domain. An interaction with ROCK1 region spans residues Ser308 to Pro353. Positions Ala344–Thr367 are disordered. Residue Ser375 is modified to Phosphoserine. A disordered region spans residues Asp385–Ser407. Over residues His388–Gly398 the composition is skewed to polar residues. The chain crosses the membrane as a helical span at residues Leu504–Glu524.

Interacts with CTNND1. Interacts with ITGB5 (via cytoplasmic domain) and ROCK1.

It localises to the membrane. The protein resides in the cell junction. It is found in the adherens junction. Functionally, may be involved in regulation of cell migration. May regulate cell-matrix interactions via its interaction with ITGB5 and modifying ITGB5 cytoplasmic tail interactions such as with FERMT2 and TLN1. May regulate ROCK1 kinase activity possibly involved in regulation of actin stress fiber formation. The protein is FERM domain-containing protein 5 (FRMD5) of Homo sapiens (Human).